The sequence spans 274 residues: Large ribosomal subunit protein uL2cz/uL2cy (274 aa).

Disordered stretches follow at residues 1-23 and 224-274; these read MAIH…SQVK and NPVD…RRSK.

It belongs to the universal ribosomal protein uL2 family. Part of the 50S ribosomal subunit.

It is found in the plastid. Its subcellular location is the chloroplast. This Vitis vinifera (Grape) protein is Large ribosomal subunit protein uL2cz/uL2cy (rpl2-A).